Here is a 464-residue protein sequence, read N- to C-terminus: NADH dehydrogenase [ubiquinone] flavoprotein 1, mitochondrial (464 aa).

Residues 1–20 (MLAARRLLGGSLPSRVSVRF) constitute a mitochondrion transit peptide. Residue lysine 81 is modified to N6-acetyllysine; alternate. The residue at position 81 (lysine 81) is an N6-succinyllysine; alternate. 87–96 (GRGGAGFPTG) contributes to the NADH binding site. The residue at position 104 (lysine 104) is an N6-acetyllysine. An FMN-binding site is contributed by 199-247 (RGAGAYICGEETALIESIEGKQGKPRLKPPFPADVGVFGCPTTVANVET). Omega-N-methylarginine is present on arginine 257. At lysine 375 the chain carries N6-acetyllysine. Cysteine 379, cysteine 382, cysteine 385, and cysteine 425 together coordinate [4Fe-4S] cluster.

The protein belongs to the complex I 51 kDa subunit family. As to quaternary structure, core subunit of respiratory chain NADH dehydrogenase (Complex I) which is composed of 45 different subunits. This is a component of the flavoprotein-sulfur (FP) fragment of the enzyme. Interacts with RAB5IF. Requires FMN as cofactor. The cofactor is [4Fe-4S] cluster.

The protein localises to the mitochondrion inner membrane. The catalysed reaction is a ubiquinone + NADH + 5 H(+)(in) = a ubiquinol + NAD(+) + 4 H(+)(out). Functionally, core subunit of the mitochondrial membrane respiratory chain NADH dehydrogenase (Complex I) which catalyzes electron transfer from NADH through the respiratory chain, using ubiquinone as an electron acceptor. Part of the peripheral arm of the enzyme, where the electrons from NADH are accepted by flavin mononucleotide (FMN) and then passed along a chain of iron-sulfur clusters by electron tunnelling to the final acceptor ubiquinone. Contains FMN, which is the initial electron acceptor as well as one iron-sulfur cluster. This Macaca fascicularis (Crab-eating macaque) protein is NADH dehydrogenase [ubiquinone] flavoprotein 1, mitochondrial.